Consider the following 927-residue polypeptide: Perchlorate reductase subunit alpha (927 aa).

Positions 1–31 (MVQMTRRGFLLASGATLLGSSLSFRTLAAAA) form a signal peptide, tat-type signal. The 64-residue stretch at 53–116 (DKKTRGAHLI…CAHDYMYGPH (64 aa)) folds into the 4Fe-4S Mo/W bis-MGD-type domain. [4Fe-4S] cluster-binding residues include H60, C64, C68, and C102. Position 198 (D198) interacts with Mo-bis(molybdopterin guanine dinucleotide).

It belongs to the prokaryotic molybdopterin-containing oxidoreductase family. In terms of assembly, heterotrimer of alpha, beta and gamma subunits. The cofactor is [4Fe-4S] cluster. Requires Mo-bis(molybdopterin guanine dinucleotide) as cofactor. In terms of processing, predicted to be exported by the Tat system. The position of the signal peptide cleavage has not been experimentally proven.

The protein localises to the periplasm. Its function is as follows. Component of the perchlorate reductase that catalyzes the reduction of perchlorate to chlorite and allows anaerobic growth on perchlorate as the sole electron acceptor. Is probably also able to reduce chlorate to chlorite. The alpha subunit is likely the catalytic subunit. This chain is Perchlorate reductase subunit alpha (pcrA), found in Dechloromonas aromatica (strain RCB).